Reading from the N-terminus, the 1009-residue chain is Glutamate receptor ionotropic, delta-2 (1009 aa).

The first 23 residues, 1–23, serve as a signal peptide directing secretion; it reads MKVFPAVLFLITFWSLEWEPVLP. Residues 24–566 are Extracellular-facing; that stretch reads DSIIHIGAIF…DMFACLAPFD (543 aa). N-linked (GlcNAc...) asparagine glycans are attached at residues Asn293, Asn306, Asn390, and Asn426. Positions 531, 534, and 535 each coordinate Ca(2+). A helical membrane pass occupies residues 567 to 587; sequence LSLWACIAGTVLLVGTLVYLL. The Cytoplasmic portion of the chain corresponds to 588 to 635; that stretch reads NWLNPPRLPMGSVSSTTLYNSMWFVYGSFVQQGGEVPYTTLATRMMMG. A helical membrane pass occupies residues 636 to 656; that stretch reads VWWLFALIVISSYTANLAAFL. Over 657 to 830 the chain is Extracellular; the sequence is TISRIENSIQ…KSGSALDIHS (174 aa). N-linked (GlcNAc...) asparagine glycosylation is present at Asn713. Ca(2+) contacts are provided by Asp753, Asp755, and Ser757. A helical transmembrane segment spans residues 831–851; sequence FAGVFFVLAAGVVLSCLIATV. The Cytoplasmic portion of the chain corresponds to 852 to 1009; it reads ETWWTRRKGS…GNDPDRGTSI (158 aa). Residues 989–1009 are disordered; it reads YQPTPAPNFSYGNDPDRGTSI.

The protein belongs to the glutamate-gated ion channel (TC 1.A.10.1) family. GRID2 subfamily. Tetramer; dimer of dimers. Expressed in cerebellar Purkinje cells, in crest cells in the medial octavolateral nucleus and in type I neurons of the optic tectum.

It localises to the postsynaptic cell membrane. It catalyses the reaction Ca(2+)(in) = Ca(2+)(out). The enzyme catalyses Na(+)(in) = Na(+)(out). In terms of biological role, member of the ionotropic glutamate receptor family, which plays a crucial role in synaptic organization and signal transduction in the central nervous system. Although it shares structural features with ionotropic glutamate receptors, does not bind glutamate as a primary ligand. Promotes synaptogenesis and mediates the D-Serine-dependent long term depression signals and AMPA receptor endocytosis of cerebellar parallel fiber-Purkinje cell (PF-PC) synapses through the NRX1B-CBLN1-GRID2 triad complex. In the presence of neurexins and cerebellins, forms cation-selective channels that are proposed to be gated by glycine and D-serine. However, recent research disputes this ligand-gated cation channel activity. Cation-selective ion channel activity can be triggered by GRM1 in Purkinje cells. In Danio rerio (Zebrafish), this protein is Glutamate receptor ionotropic, delta-2.